A 285-amino-acid chain; its full sequence is Pantothenate synthetase (285 aa).

30–37 (MGYLHEGH) provides a ligand contact to ATP. H37 functions as the Proton donor in the catalytic mechanism. Q61 serves as a coordination point for (R)-pantoate. Q61 is a binding site for beta-alanine. Position 148 to 151 (148 to 151 (GKKD)) interacts with ATP. Q154 is a (R)-pantoate binding site. ATP is bound by residues V177 and 185 to 188 (LSSR).

It belongs to the pantothenate synthetase family. In terms of assembly, homodimer.

It localises to the cytoplasm. The enzyme catalyses (R)-pantoate + beta-alanine + ATP = (R)-pantothenate + AMP + diphosphate + H(+). The protein operates within cofactor biosynthesis; (R)-pantothenate biosynthesis; (R)-pantothenate from (R)-pantoate and beta-alanine: step 1/1. Its function is as follows. Catalyzes the condensation of pantoate with beta-alanine in an ATP-dependent reaction via a pantoyl-adenylate intermediate. In Leptospira interrogans serogroup Icterohaemorrhagiae serovar Lai (strain 56601), this protein is Pantothenate synthetase.